We begin with the raw amino-acid sequence, 1184 residues long: Calcium-activated potassium channel subunit alpha-1a (1184 aa).

Topologically, residues Met-1 to Met-39 are extracellular. The chain crosses the membrane as a helical span at residues Trp-40 to Leu-60. Residues Trp-61–Arg-132 lie on the Cytoplasmic side of the membrane. 3 S-palmitoyl cysteine lipidation sites follow: Cys-71, Cys-72, and Cys-74. A helical membrane pass occupies residues Val-133 to Ser-153. Residues Ser-154–Thr-168 lie on the Extracellular side of the membrane. Residues Leu-169–Ala-189 traverse the membrane as a helical segment. Residues Ala-190–Lys-193 lie on the Cytoplasmic side of the membrane. Residues Leu-194–Val-214 traverse the membrane as a helical segment. The Extracellular portion of the chain corresponds to Ser-215 to Leu-254. Residues Val-255–Val-275 traverse the membrane as a helical segment. The Cytoplasmic segment spans residues Glu-276–Gln-289. A helical membrane pass occupies residues Pro-290 to Gly-310. Residues Asp-311–Leu-321 lie on the Extracellular side of the membrane. Residues Phe-322 to Ile-342 form a helical membrane-spanning segment. Residues Glu-343–Cys-1184 are Cytoplasmic-facing. The RCK N-terminal 1 domain occupies Arg-361–Ile-503. The Mg(2+) site is built by Glu-393, Gln-416, and Glu-418. Residue Asn-468 participates in Ca(2+) binding. Residues Glu-655–Cys-677 are disordered. Residue Thr-659 is modified to Phosphothreonine. Ser-661, Ser-674, and Ser-678 each carry phosphoserine. Residues Ser-735–Pro-879 form the RCK N-terminal 2 domain. The residue at position 866 (Thr-866) is a Phosphothreonine. Phosphoserine is present on residues Ser-874 and Ser-878. Gln-908, Asp-911, Asp-914, and Asp-916 together coordinate Ca(2+). The Calcium bowl motif lies at Gln-908–Asp-916. A disordered region spans residues Arg-1082–Ala-1143. Residues Ser-1084–Ser-1104 are compositionally biased toward low complexity. The segment covering Lys-1116–Asn-1125 has biased composition (basic and acidic residues).

This sequence belongs to the potassium channel family. Calcium-activated (TC 1.A.1.3) subfamily. KCa1.1/KCNMA1 sub-subfamily. As to quaternary structure, homotetramer; which constitutes the calcium-activated potassium channel. Phosphorylated. Post-translationally, palmitoylated.

It localises to the cell membrane. It carries out the reaction K(+)(in) = K(+)(out). Potassium channel activated by both membrane depolarization or increase in cytosolic Ca(2+) that mediates export of K(+). It is also activated by the concentration of cytosolic Mg(2+). Its activation dampens the excitatory events that elevate the cytosolic Ca(2+) concentration and/or depolarize the cell membrane. It therefore contributes to repolarization of the membrane potential. Involved in determining peripheral auditory sensitivity. The sequence is that of Calcium-activated potassium channel subunit alpha-1a from Danio rerio (Zebrafish).